The following is a 794-amino-acid chain: Phenylalanine--tRNA ligase beta subunit (794 aa).

Positions Ala39 to Arg148 constitute a tRNA-binding domain. A B5 domain is found at Pro399–Ser474. 4 residues coordinate Mg(2+): Asp452, Asp458, Glu461, and Glu462. The region spanning Ser700–Arg793 is the FDX-ACB domain.

This sequence belongs to the phenylalanyl-tRNA synthetase beta subunit family. Type 1 subfamily. As to quaternary structure, tetramer of two alpha and two beta subunits. The cofactor is Mg(2+).

The protein localises to the cytoplasm. The enzyme catalyses tRNA(Phe) + L-phenylalanine + ATP = L-phenylalanyl-tRNA(Phe) + AMP + diphosphate + H(+). The protein is Phenylalanine--tRNA ligase beta subunit of Dechloromonas aromatica (strain RCB).